A 397-amino-acid chain; its full sequence is Proteasome-activating nucleotidase (397 aa).

The stretch at 15 to 58 (DYVTFLKRRIRQLELQVRTLEADKERLERELSRLRMEMSRLRQP) forms a coiled coil. Residues 182-187 (GCGKTL) and His-321 contribute to the ATP site. Residues 395 to 397 (MYG) form a docks into pockets in the proteasome alpha-ring to cause gate opening region.

This sequence belongs to the AAA ATPase family. As to quaternary structure, homohexamer. The hexameric complex has a two-ring architecture resembling a top hat that caps the 20S proteasome core at one or both ends. Upon ATP-binding, the C-terminus of PAN interacts with the alpha-rings of the proteasome core by binding to the intersubunit pockets.

The protein resides in the cytoplasm. In terms of biological role, ATPase which is responsible for recognizing, binding, unfolding and translocation of substrate proteins into the archaeal 20S proteasome core particle. Is essential for opening the gate of the 20S proteasome via an interaction with its C-terminus, thereby allowing substrate entry and access to the site of proteolysis. Thus, the C-termini of the proteasomal ATPase function like a 'key in a lock' to induce gate opening and therefore regulate proteolysis. Unfolding activity requires energy from ATP hydrolysis, whereas ATP binding alone promotes ATPase-20S proteasome association which triggers gate opening, and supports translocation of unfolded substrates. The protein is Proteasome-activating nucleotidase of Thermococcus kodakarensis (strain ATCC BAA-918 / JCM 12380 / KOD1) (Pyrococcus kodakaraensis (strain KOD1)).